Reading from the N-terminus, the 428-residue chain is Ribulose bisphosphate carboxylase (428 aa).

Lysine 151 functions as the Proton acceptor in the catalytic mechanism. Lysine 153 contributes to the substrate binding site. The Mg(2+) site is built by lysine 177, aspartate 179, and glutamate 180. At lysine 177 the chain carries N6-carboxylysine. Histidine 270 (proton acceptor) is an active-site residue. Substrate-binding positions include arginine 271, histidine 303, serine 354–glycine 356, and glutamine 376–glycine 379.

The protein belongs to the RuBisCO large chain family. Type III subfamily. As to quaternary structure, homodimer. In contrast to form I RuBisCO, the form III RuBisCO is composed solely of large subunits. Requires Mg(2+) as cofactor.

It catalyses the reaction 2 (2R)-3-phosphoglycerate + 2 H(+) = D-ribulose 1,5-bisphosphate + CO2 + H2O. The catalysed reaction is D-ribulose 1,5-bisphosphate + O2 = 2-phosphoglycolate + (2R)-3-phosphoglycerate + 2 H(+). With respect to regulation, reversibly inhibited by O(2). Catalyzes the addition of molecular CO(2) and H(2)O to ribulose 1,5-bisphosphate (RuBP), generating two molecules of 3-phosphoglycerate (3-PGA). Functions in an archaeal AMP degradation pathway, together with AMP phosphorylase and R15P isomerase. The protein is Ribulose bisphosphate carboxylase of Methanosarcina acetivorans (strain ATCC 35395 / DSM 2834 / JCM 12185 / C2A).